The chain runs to 660 residues: Translation factor GUF1, mitochondrial (660 aa).

The N-terminal 42 residues, 1–42 (MRSCVRTASSVLQSWRAHTVLRNGCPLPSRTLERLPRLARSY), are a transit peptide targeting the mitochondrion. The region spanning 62–242 (ERYRNFCIVA…AVVEKIPAPV (181 aa)) is the tr-type G domain. Residues 71–78 (AHVDHGKS), 135–139 (DTPGH), and 189–192 (NKVD) contribute to the GTP site.

This sequence belongs to the TRAFAC class translation factor GTPase superfamily. Classic translation factor GTPase family. LepA subfamily.

The protein localises to the mitochondrion inner membrane. It carries out the reaction GTP + H2O = GDP + phosphate + H(+). Its function is as follows. Promotes mitochondrial protein synthesis. May act as a fidelity factor of the translation reaction, by catalyzing a one-codon backward translocation of tRNAs on improperly translocated ribosomes. Binds to mitochondrial ribosomes in a GTP-dependent manner. This Phaeosphaeria nodorum (strain SN15 / ATCC MYA-4574 / FGSC 10173) (Glume blotch fungus) protein is Translation factor GUF1, mitochondrial.